A 457-amino-acid chain; its full sequence is Multidrug resistance protein MdtK (457 aa).

Topologically, residues 1 to 10 are cytoplasmic; the sequence is MQKYISEARL. The chain crosses the membrane as a helical span at residues 11–31; sequence LLALAIPVILAQIAQTAMGFV. The Periplasmic segment spans residues 32-52; sequence DTVMAGGYSATDMAAVAIGTS. The chain crosses the membrane as a helical span at residues 53-73; the sequence is IWLPAILFGHGLLLALTPVIA. Residues 74–92 are Cytoplasmic-facing; sequence QLNGSGRRERIAHQVRQGF. Residues 93 to 113 traverse the membrane as a helical segment; that stretch reads WLAGFVSVLIMLVLWNAGYII. Over 114-126 the chain is Periplasmic; it reads RSMENIDPALADK. A helical transmembrane segment spans residues 127-147; that stretch reads AVGYLRALLWGAPGYLFFQVA. Residues 148–159 lie on the Cytoplasmic side of the membrane; sequence RNQCEGLAKTKP. A helical membrane pass occupies residues 160–180; it reads GMVMGFIGLLVNIPVNYIFIY. Residues 181 to 188 are Periplasmic-facing; sequence GHFGMPEL. The chain crosses the membrane as a helical span at residues 189–209; sequence GGVGCGVATAAVYWVMFLAMV. The Cytoplasmic portion of the chain corresponds to 210 to 242; the sequence is SYIKRARSMRDIRNEKGTAKPDPAVMKRLIQLG. The helical transmembrane segment at 243 to 263 threads the bilayer; that stretch reads LPIALALFFEVTLFAVVALLV. The Periplasmic segment spans residues 264 to 275; that stretch reads SPLGIVDVAGHQ. Residues 276–296 form a helical membrane-spanning segment; sequence IALNFSSLMFVLPMSLAAAVT. Residues 297–313 are Cytoplasmic-facing; the sequence is IRVGYRLGQGSTLDAQT. The chain crosses the membrane as a helical span at residues 314–334; it reads AARTGLMVGVCMATLTAIFTV. The Periplasmic portion of the chain corresponds to 335–349; that stretch reads SLREQIALLYNDNPE. A helical transmembrane segment spans residues 350 to 370; sequence VVTLAAHLMLLAAVYQISDSI. At 371–386 the chain is on the cytoplasmic side; it reads QVIGSGILRGYKDTRS. A helical transmembrane segment spans residues 387–407; the sequence is IFYITFTAYWVLGLPSGYILA. The Periplasmic segment spans residues 408–417; sequence LTDLVVEPMG. Residues 418–438 form a helical membrane-spanning segment; the sequence is PAGFWIGFIIGLTSAAIMMML. The Cytoplasmic portion of the chain corresponds to 439 to 457; it reads RMRFLQRMPSAIILQRASR.

This sequence belongs to the multi antimicrobial extrusion (MATE) (TC 2.A.66.1) family. MdtK subfamily.

It is found in the cell inner membrane. Functionally, multidrug efflux pump that functions probably as a Na(+)/drug antiporter. This chain is Multidrug resistance protein MdtK, found in Shigella boydii serotype 4 (strain Sb227).